The primary structure comprises 120 residues: Meiosis expressed gene 1 protein homolog (120 aa).

The segment at 1–45 (MDGLAIGGVSAPMTAERPQQVKKQLSRRTPDAADGRKPTRMERAK) is disordered. Residues 28-45 (RTPDAADGRKPTRMERAK) show a composition bias toward basic and acidic residues.

The protein belongs to the MEIG1 family.

The protein is Meiosis expressed gene 1 protein homolog of Oxyrrhis marina (Dinoflagellate).